A 319-amino-acid polypeptide reads, in one-letter code: Aspartate carbamoyltransferase catalytic subunit (319 aa).

Positions 59 and 60 each coordinate carbamoyl phosphate. Lys-87 lines the L-aspartate pocket. Residues Arg-109, His-137, and Gln-140 each contribute to the carbamoyl phosphate site. L-aspartate contacts are provided by Arg-170 and Arg-224. Carbamoyl phosphate-binding residues include Gly-265 and Pro-266.

The protein belongs to the aspartate/ornithine carbamoyltransferase superfamily. ATCase family. In terms of assembly, heterododecamer (2C3:3R2) of six catalytic PyrB chains organized as two trimers (C3), and six regulatory PyrI chains organized as three dimers (R2).

It carries out the reaction carbamoyl phosphate + L-aspartate = N-carbamoyl-L-aspartate + phosphate + H(+). Its pathway is pyrimidine metabolism; UMP biosynthesis via de novo pathway; (S)-dihydroorotate from bicarbonate: step 2/3. Catalyzes the condensation of carbamoyl phosphate and aspartate to form carbamoyl aspartate and inorganic phosphate, the committed step in the de novo pyrimidine nucleotide biosynthesis pathway. The sequence is that of Aspartate carbamoyltransferase catalytic subunit from Gemmatimonas aurantiaca (strain DSM 14586 / JCM 11422 / NBRC 100505 / T-27).